The chain runs to 156 residues: Sensor histidine kinase component HK2 (156 aa).

The Extracellular portion of the chain corresponds to 1–42 (MALVLAAAGAVTVVQFRDAAHEADPDGALRGLTDDITADLVR). Residues 43-63 (ELVTILPIVLVIAAVAAYLLS) traverse the membrane as a helical segment. Positions 64–120 (RAALRPVDRIRAAAQTLTTTPHPDTDAPLPVPPTDDEIAWLATTLNTMLTRLQRALA) constitute an HAMP domain. The Cytoplasmic segment spans residues 64 to 156 (RAALRPVDRI…RCAGPDPPTS (93 aa)). A Histidine kinase; first part domain is found at 128-156 (DASHELRTPLALLTTELELRCAGPDPPTS). A Phosphohistidine; by autocatalysis modification is found at H131.

Homodimer. Each monomer interacts with HK1 and the receiver domain of TcrA. In terms of processing, phosphorylated by HK1.

Its subcellular location is the cell membrane. It catalyses the reaction ATP + protein L-histidine = ADP + protein N-phospho-L-histidine.. Functionally, member of the three-protein two-component system HK1/HK2/TcrA. HK2 transfers its phosphoryl group to TcrA. This is Sensor histidine kinase component HK2 from Mycobacterium tuberculosis (strain ATCC 25618 / H37Rv).